We begin with the raw amino-acid sequence, 190 residues long: GATA transcription factor 17 (190 aa).

Positions 1–14 are enriched in basic and acidic residues; that stretch reads MSEGSEDTKTKLDS. 2 disordered regions span residues 1 to 42 and 77 to 101; these read MSEG…DTKR and RQAA…NDLN. A GATA-type zinc finger spans residues 38 to 92; that stretch reads GDTKRTCVDCGTIRTPLWRGGPAGPKSLCNACGIKSRKKRQAALGMRSEEKKKNR.

Belongs to the type IV zinc-finger family. Class B subfamily.

It localises to the nucleus. Transcriptional regulator that specifically binds 5'-GATA-3' or 5'-GAT-3' motifs within gene promoters. The polypeptide is GATA transcription factor 17 (GATA17) (Arabidopsis thaliana (Mouse-ear cress)).